The primary structure comprises 137 residues: Proofreading thioesterase EntH (137 aa).

Glutamate 63 serves as the catalytic Nucleophile or proton acceptor.

It belongs to the thioesterase PaaI family. As to quaternary structure, homotetramer. Dimer of dimers. Interacts specifically with the aryl carrier protein (ArCP) domain of EntB.

The protein resides in the cytoplasm. The protein operates within siderophore biosynthesis; enterobactin biosynthesis. Its function is as follows. Required for optimal enterobactin synthesis. Acts as a proofreading enzyme that prevents EntB misacylation by hydrolyzing the thioester bound existing between EntB and wrongly charged molecules. The protein is Proofreading thioesterase EntH of Salmonella typhimurium (strain LT2 / SGSC1412 / ATCC 700720).